The sequence spans 333 residues: Phosphate acyltransferase (333 aa).

The protein belongs to the PlsX family. In terms of assembly, homodimer. Probably interacts with PlsY.

It localises to the cytoplasm. It carries out the reaction a fatty acyl-[ACP] + phosphate = an acyl phosphate + holo-[ACP]. It functions in the pathway lipid metabolism; phospholipid metabolism. In terms of biological role, catalyzes the reversible formation of acyl-phosphate (acyl-PO(4)) from acyl-[acyl-carrier-protein] (acyl-ACP). This enzyme utilizes acyl-ACP as fatty acyl donor, but not acyl-CoA. The polypeptide is Phosphate acyltransferase (Thermoanaerobacterium thermosaccharolyticum (strain ATCC 7956 / DSM 571 / NCIMB 9385 / NCA 3814 / NCTC 13789 / WDCM 00135 / 2032) (Clostridium thermosaccharolyticum)).